The primary structure comprises 91 residues: UPF0250 protein PputW619_0619 (91 aa).

It belongs to the UPF0250 family.

This Pseudomonas putida (strain W619) protein is UPF0250 protein PputW619_0619.